A 481-amino-acid polypeptide reads, in one-letter code: Glutamyl-tRNA(Gln) amidotransferase subunit A (481 aa).

Residues Lys77 and Ser151 each act as charge relay system in the active site. The active-site Acyl-ester intermediate is Ser175.

This sequence belongs to the amidase family. GatA subfamily. In terms of assembly, heterotrimer of A, B and C subunits.

The catalysed reaction is L-glutamyl-tRNA(Gln) + L-glutamine + ATP + H2O = L-glutaminyl-tRNA(Gln) + L-glutamate + ADP + phosphate + H(+). Functionally, allows the formation of correctly charged Gln-tRNA(Gln) through the transamidation of misacylated Glu-tRNA(Gln) in organisms which lack glutaminyl-tRNA synthetase. The reaction takes place in the presence of glutamine and ATP through an activated gamma-phospho-Glu-tRNA(Gln). This chain is Glutamyl-tRNA(Gln) amidotransferase subunit A, found in Rubrobacter xylanophilus (strain DSM 9941 / JCM 11954 / NBRC 16129 / PRD-1).